Consider the following 1184-residue polypeptide: DNA-directed RNA polymerase subunit beta (1184 aa).

Residues 1160–1184 (DDDFTNQNDAFNIVQPENAATEKTE) form a disordered region.

The protein belongs to the RNA polymerase beta chain family. As to quaternary structure, the RNAP catalytic core consists of 2 alpha, 1 beta, 1 beta' and 1 omega subunit. When a sigma factor is associated with the core the holoenzyme is formed, which can initiate transcription.

The catalysed reaction is RNA(n) + a ribonucleoside 5'-triphosphate = RNA(n+1) + diphosphate. Functionally, DNA-dependent RNA polymerase catalyzes the transcription of DNA into RNA using the four ribonucleoside triphosphates as substrates. This is DNA-directed RNA polymerase subunit beta from Listeria innocua serovar 6a (strain ATCC BAA-680 / CLIP 11262).